The sequence spans 391 residues: Multidrug resistance protein MdtL (391 aa).

12 helical membrane-spanning segments follow: residues 4 to 24, 42 to 62, 69 to 89, 93 to 113, 131 to 151, 158 to 178, 203 to 222, 245 to 265, 269 to 289, 293 to 313, 331 to 351, and 356 to 376; these read FLIC…MYLV, IAFS…GKVA, PVAI…SLAE, LFLA…VVAF, LLNG…HLIM, SLFW…LFIL, FFLS…LTFV, ALTA…LGIF, TLMI…AVSP, VSLF…GVAM, LGIA…VVGI, and MLIG…MFVA.

Belongs to the major facilitator superfamily. DHA1 family. MdtL (TC 2.A.1.2.22) subfamily.

It is found in the cell inner membrane. Functionally, confers resistance to chloramphenicol. The polypeptide is Multidrug resistance protein MdtL (Escherichia coli O9:H4 (strain HS)).